The following is a 62-amino-acid chain: Agnoprotein (62 aa).

The Cytoplasmic portion of the chain corresponds to 1-23; sequence MVLRRLSRQASVKVRRSWTESKK. The helical; Signal-anchor for type II membrane protein transmembrane segment at 24 to 40 threads the bilayer; sequence TAQRLFVFVLELLLQFC. At 41–62 the chain is on the extracellular side; the sequence is EGEDTVDGKRKKPERLTEKPES.

It belongs to the polyomaviruses agnoprotein family. Homooligomer. Interacts with VP1. Interacts with large T antigen; this interaction may impact upon the activity of T-antigen on the control of viral gene transcription and replication. Interacts with small t antigen. Interacts with host CBX5; this interaction induces the dissociation of CBX5 from LBR, resulting in destabilization of the nuclear envelope. Phosphorylated by host kinase. Phosphorylation segregates agnoprotein in cytoplasm, whereas unphosphorylated agnoprotein migrate to the nucleus.

The protein resides in the host cytoplasm. The protein localises to the host nucleus membrane. Its subcellular location is the host rough endoplasmic reticulum membrane. It is found in the host cell membrane. Alters the structure of the nuclear envelope by interacting with host CBX5 and disrupting CBX5 association with LBR. Involved in the perinuclear-nuclear localization of the capsid protein VP1 during virion assembly and maturation. Plays an important role in the release of progeny virions from infected cells and in viral propagation, probably by acting as a viral ionic channel in the host plasma membrane. Allows influx of extracellular calcium ions in the host cell. May contribute to viral genome transcription and translation of viral late proteins. The chain is Agnoprotein from Simian virus 40 (SV40).